Reading from the N-terminus, the 196-residue chain is ATP-dependent Clp protease proteolytic subunit (196 aa).

The active-site Nucleophile is serine 98. Residue histidine 123 is part of the active site.

Belongs to the peptidase S14 family. Fourteen ClpP subunits assemble into 2 heptameric rings which stack back to back to give a disk-like structure with a central cavity, resembling the structure of eukaryotic proteasomes.

It is found in the cytoplasm. It catalyses the reaction Hydrolysis of proteins to small peptides in the presence of ATP and magnesium. alpha-casein is the usual test substrate. In the absence of ATP, only oligopeptides shorter than five residues are hydrolyzed (such as succinyl-Leu-Tyr-|-NHMec, and Leu-Tyr-Leu-|-Tyr-Trp, in which cleavage of the -Tyr-|-Leu- and -Tyr-|-Trp bonds also occurs).. Cleaves peptides in various proteins in a process that requires ATP hydrolysis. Has a chymotrypsin-like activity. Plays a major role in the degradation of misfolded proteins. ClpXP is involved in the complete degradation of the Site-2 clipped anti-sigma-W factor RsiW. This results in the release of SigW and the transcription activation of the genes under the control of the sigma-W factor. This is ATP-dependent Clp protease proteolytic subunit from Geobacillus kaustophilus (strain HTA426).